A 552-amino-acid polypeptide reads, in one-letter code: Gamma-aminobutyric acid receptor subunit alpha-4 (552 aa).

The signal sequence occupies residues 1-35; that stretch reads MVSVQKVPAIALCSGVSLALLHFLCLAACLNESPG. Over 36–259 the chain is Extracellular; the sequence is QNSKDEKLCP…FHLRRKMGYF (224 aa). Asn-47 carries N-linked (GlcNAc...) asparagine glycosylation. Arg-100 is a binding site for 4-aminobutanoate. N-linked (GlcNAc...) asparagine glycosylation is found at Asn-144 and Asn-157. Thr-163 is a 4-aminobutanoate binding site. Cysteines 172 and 186 form a disulfide. A helical transmembrane segment spans residues 260 to 280; that stretch reads MIQTYIPCIMTVILSQVSFWI. At 281–284 the chain is on the cytoplasmic side; that stretch reads NKES. Residues 285-305 form a helical membrane-spanning segment; the sequence is VPARTVFGITTVLTMTTLSIS. The Extracellular segment spans residues 306-318; the sequence is ARHSLPKVSYATA. A helical transmembrane segment spans residues 319–341; it reads MDWFIAVCFAFVFSALIEFAAVN. The Cytoplasmic portion of the chain corresponds to 342-515; it reads YFTNIQMQKA…PPPSGSGTSK (174 aa). Disordered stretches follow at residues 353–480 and 492–513; these read KKIS…FGSR and GAAG…GSGT. A compositionally biased stretch (basic and acidic residues) spans 396-406; that stretch reads SESDVKSRTEV. Positions 407–422 are enriched in polar residues; sequence GNHSSKTSAVQESSEA. Positions 445 to 458 are enriched in low complexity; the sequence is SAAARGLSSAASPS. A compositionally biased stretch (pro residues) spans 500–509; sequence TPPPPAPPPS. Residues 516–538 form a helical membrane-spanning segment; sequence IDKYARILFPVTFGAFNMVYWVV. Residues 539 to 552 lie on the Extracellular side of the membrane; the sequence is YLSKDTMEKSESLM.

Belongs to the ligand-gated ion channel (TC 1.A.9) family. Gamma-aminobutyric acid receptor (TC 1.A.9.5) subfamily. GABRA4 sub-subfamily. As to quaternary structure, heteropentamer, formed by a combination of alpha (GABRA1-6), beta (GABRB1-3), gamma (GABRG1-3), delta (GABRD), epsilon (GABRE), rho (GABRR1-3), pi (GABRP) and theta (GABRQ) chains, each subunit exhibiting distinct physiological and pharmacological properties. In terms of tissue distribution, expressed in the brain.

Its subcellular location is the cell membrane. It localises to the postsynaptic cell membrane. It catalyses the reaction chloride(in) = chloride(out). With respect to regulation, potentiated by gaboxadol. Potentiated by histamine. In terms of biological role, alpha subunit of the heteropentameric ligand-gated chloride channel gated by gamma-aminobutyric acid (GABA), a major inhibitory neurotransmitter in the brain. GABA-gated chloride channels, also named GABA(A) receptors (GABAAR), consist of five subunits arranged around a central pore and contain GABA active binding site(s) located at the alpha and beta subunit interface(s). Alpha-4/GABRA4 subunit often assembles with delta or gamma-2 subunits, in combination with beta subunits. When activated by GABA, GABAARs selectively allow the flow of chloride anions across the cell membrane down their electrochemical gradient. GABAARs containing alpha-4 are predominantly extrasynaptic, contributing to tonic inhibition in dentate granule cells and thalamic relay neurons. Extrasynaptic alpha-4-containing GABAARs control levels of excitability and network activity. GABAAR containing alpha-4-beta-3-delta subunits can simultaneously bind GABA and histamine where histamine binds at the interface of two neighboring beta subunits, which may be involved in the regulation of sleep and wakefulness. This Mus musculus (Mouse) protein is Gamma-aminobutyric acid receptor subunit alpha-4.